A 245-amino-acid polypeptide reads, in one-letter code: 3-deoxy-manno-octulosonate cytidylyltransferase (245 aa).

The protein belongs to the KdsB family.

The protein resides in the cytoplasm. The catalysed reaction is 3-deoxy-alpha-D-manno-oct-2-ulosonate + CTP = CMP-3-deoxy-beta-D-manno-octulosonate + diphosphate. It functions in the pathway nucleotide-sugar biosynthesis; CMP-3-deoxy-D-manno-octulosonate biosynthesis; CMP-3-deoxy-D-manno-octulosonate from 3-deoxy-D-manno-octulosonate and CTP: step 1/1. Its pathway is bacterial outer membrane biogenesis; lipopolysaccharide biosynthesis. Functionally, activates KDO (a required 8-carbon sugar) for incorporation into bacterial lipopolysaccharide in Gram-negative bacteria. This chain is 3-deoxy-manno-octulosonate cytidylyltransferase, found in Rhodopseudomonas palustris (strain TIE-1).